The sequence spans 116 residues: Heme-degrading monooxygenase (116 aa).

An ABM domain is found at 2 to 92 (VIVTNTSKIT…EYILENKISF (91 aa)). Asn6 serves as a coordination point for Fe cation. His76 contributes to the heme binding site.

This sequence belongs to the antibiotic biosynthesis monooxygenase family. Heme-degrading monooxygenase IsdG subfamily. In terms of assembly, homodimer.

It is found in the cytoplasm. The enzyme catalyses heme b + 3 reduced [NADPH--hemoprotein reductase] + 3 O2 = biliverdin IXalpha + CO + Fe(2+) + 3 oxidized [NADPH--hemoprotein reductase] + 3 H2O + H(+). Allows bacterial pathogens to use the host heme as an iron source. Catalyzes the oxidative degradation of the heme macrocyclic porphyrin ring to the biliverdin in the presence of a suitable electron donor such as ascorbate or NADPH--cytochrome P450 reductase, with subsequent release of free iron. The sequence is that of Heme-degrading monooxygenase from Halalkalibacterium halodurans (strain ATCC BAA-125 / DSM 18197 / FERM 7344 / JCM 9153 / C-125) (Bacillus halodurans).